Consider the following 611-residue polypeptide: Pseudomonine synthase PmsE (611 aa).

In terms of domain architecture, Carrier spans 533 to 608; the sequence is VSVENTRTWL…SWWALVEARQ (76 aa). S569 carries the post-translational modification O-(pantetheine 4'-phosphoryl)serine.

The protein belongs to the ATP-dependent AMP-binding enzyme family. The cofactor is pantetheine 4'-phosphate.

The enzyme catalyses salicylate + holo-[ACP] + ATP = salicyl-[ACP] + AMP + diphosphate. It participates in siderophore biosynthesis; pseudomonine biosynthesis. Involved in the biosynthesis of the siderophore pseudomonine. Specifically adenylates salicylate and loads it onto its peptidyl carrier domain, via a thioester linkage to the phosphopanthetheine moiety. The polypeptide is Pseudomonine synthase PmsE (Pseudomonas entomophila (strain L48)).